Consider the following 396-residue polypeptide: Elongation factor Tu (396 aa).

Residues 10–206 (KLHVNVGTIG…ALDTHIPNPE (197 aa)) enclose the tr-type G domain. Residues 19 to 26 (GHVDHGKT) are G1. Residue 19–26 (GHVDHGKT) coordinates GTP. Residue Thr-26 coordinates Mg(2+). The interval 60–64 (GITIS) is G2. The interval 81–84 (DCPG) is G3. Residues 81–85 (DCPGH) and 136–139 (NKAD) contribute to the GTP site. The segment at 136-139 (NKAD) is G4. Residues 174-176 (SAL) are G5.

The protein belongs to the TRAFAC class translation factor GTPase superfamily. Classic translation factor GTPase family. EF-Tu/EF-1A subfamily. In terms of assembly, monomer.

The protein resides in the cytoplasm. It carries out the reaction GTP + H2O = GDP + phosphate + H(+). GTP hydrolase that promotes the GTP-dependent binding of aminoacyl-tRNA to the A-site of ribosomes during protein biosynthesis. This Xylella fastidiosa (strain 9a5c) protein is Elongation factor Tu.